Reading from the N-terminus, the 153-residue chain is Movement protein (153 aa).

Disordered regions lie at residues 1–24 (MAQE…EQDP) and 121–153 (PWVA…RNQR). A compositionally biased stretch (polar residues) spans 121–138 (PWVATLIPSQSAGPPQRS).

Belongs to the luteoviruses movement protein family.

Transports viral genome to neighboring plant cells directly through plasmosdesmata, without any budding. The movement protein allows efficient cell to cell propagation, by bypassing the host cell wall barrier. This is Movement protein from Avena byzantina (Oat).